The chain runs to 173 residues: Large ribosomal subunit protein uL10 (173 aa).

The protein belongs to the universal ribosomal protein uL10 family. Part of the ribosomal stalk of the 50S ribosomal subunit. The N-terminus interacts with L11 and the large rRNA to form the base of the stalk. The C-terminus forms an elongated spine to which L12 dimers bind in a sequential fashion forming a multimeric L10(L12)X complex.

Its function is as follows. Forms part of the ribosomal stalk, playing a central role in the interaction of the ribosome with GTP-bound translation factors. The polypeptide is Large ribosomal subunit protein uL10 (Acidithiobacillus ferrooxidans (strain ATCC 23270 / DSM 14882 / CIP 104768 / NCIMB 8455) (Ferrobacillus ferrooxidans (strain ATCC 23270))).